The following is a 361-amino-acid chain: Chorismate synthase (361 aa).

Arg48 contacts NADP(+). FMN-binding positions include 126–128, Gly269, 302–306, and Asn328; these read RSS and KPVPS.

It belongs to the chorismate synthase family. In terms of assembly, homotetramer. The cofactor is FMNH2.

The enzyme catalyses 5-O-(1-carboxyvinyl)-3-phosphoshikimate = chorismate + phosphate. The protein operates within metabolic intermediate biosynthesis; chorismate biosynthesis; chorismate from D-erythrose 4-phosphate and phosphoenolpyruvate: step 7/7. Its function is as follows. Catalyzes the anti-1,4-elimination of the C-3 phosphate and the C-6 proR hydrogen from 5-enolpyruvylshikimate-3-phosphate (EPSP) to yield chorismate, which is the branch point compound that serves as the starting substrate for the three terminal pathways of aromatic amino acid biosynthesis. This reaction introduces a second double bond into the aromatic ring system. This is Chorismate synthase from Treponema denticola (strain ATCC 35405 / DSM 14222 / CIP 103919 / JCM 8153 / KCTC 15104).